We begin with the raw amino-acid sequence, 35 residues long: Conotoxin Cal6.1g (35 aa).

A propeptide spanning residues 1 to 8 (GLSRPSKR) is cleaved from the precursor. 3 cysteine pairs are disulfide-bonded: Cys-9/Cys-25, Cys-16/Cys-29, and Cys-24/Cys-34.

The protein belongs to the conotoxin O1 superfamily. Expressed by the venom duct.

It is found in the secreted. Its function is as follows. Probable neurotoxin with unknown target. Possibly targets ion channels. This is Conotoxin Cal6.1g from Californiconus californicus (California cone).